The sequence spans 1257 residues: Neural cell adhesion molecule L1 (1257 aa).

Residues 1 to 19 form the signal peptide; it reads MVVALRYVWPLLLCSPCLL. Topologically, residues 20 to 1120 are extracellular; sequence IQIPEEYEGH…RLPPAGFATE (1101 aa). Ig-like C2-type domains follow at residues 35–125, 139–226, 240–328, 333–420, 425–507, and 518–607; these read PVIT…TAMS, PKET…EPID, PRLL…YYVT, PYWL…AYIY, PAKI…NNVT, and TQIT…AQLL. 2 cysteine pairs are disulfide-bonded: cysteine 57/cysteine 114 and cysteine 158/cysteine 209. N-linked (GlcNAc...) asparagine glycosylation is found at asparagine 100, asparagine 203, asparagine 247, and asparagine 294. 2 disulfides stabilise this stretch: cysteine 264–cysteine 312 and cysteine 354–cysteine 404. Asparagine 433, asparagine 479, asparagine 490, and asparagine 505 each carry an N-linked (GlcNAc...) asparagine glycan. Cysteine 448 and cysteine 497 are joined by a disulfide. A disulfide bridge links cysteine 539 with cysteine 591. Residues 554-556 carry the Cell attachment site motif; it reads RGD. N-linked (GlcNAc...) asparagine glycosylation is found at asparagine 588 and asparagine 671. Fibronectin type-III domains are found at residues 615–712, 717–810, 814–916, 920–1015, and 1016–1115; these read VPRL…TPEA, NPVD…SGED, AIPE…TPEG, HPEA…MALS, and GISD…LPPA. Residues 698–725 form a disordered region; sequence GEPSPVSETVVTPEAAPEKNPVDVKGEG. Positions 713–725 are enriched in basic and acidic residues; sequence APEKNPVDVKGEG. N-linked (GlcNAc...) asparagine glycosylation is found at asparagine 726, asparagine 777, asparagine 825, asparagine 849, asparagine 876, asparagine 979, asparagine 1022, asparagine 1030, asparagine 1071, and asparagine 1105. A helical membrane pass occupies residues 1121-1143; the sequence is GWFIGFVSAIILLLLVLLILCFI. Residues 1144 to 1257 are Cytoplasmic-facing; that stretch reads KRSKGGKYSV…SPINPAVALE (114 aa). 4 positions are modified to phosphoserine: serine 1163, threonine 1172, arginine 1177, and serine 1178. The segment covering 1176-1187 has biased composition (basic and acidic residues); it reads YRSLESDNEEKA. Disordered stretches follow at residues 1176-1207 and 1226-1257; these read YRSLESDNEEKAFGSSQPSLNGDIKPLGSDDS and IGQYSGKKEKEAAGGNDSSGATSPINPAVALE. Serine 1181 is subject to Phosphoserine; by CaMK2. A phosphoserine mark is found at serine 1194, serine 1243, serine 1244, and serine 1248. A compositionally biased stretch (polar residues) spans 1241–1250; it reads NDSSGATSPI.

Belongs to the immunoglobulin superfamily. L1/neurofascin/NgCAM family. In terms of assembly, interacts with SHTN1; the interaction occurs in axonal growth cones. Interacts with isoform 2 of BSG.

The protein localises to the cell membrane. It localises to the cell projection. It is found in the growth cone. The protein resides in the axon. Its subcellular location is the dendrite. Functionally, neural cell adhesion molecule involved in the dynamics of cell adhesion and in the generation of transmembrane signals at tyrosine kinase receptors. During brain development, critical in multiple processes, including neuronal migration, axonal growth and fasciculation, and synaptogenesis. In the mature brain, plays a role in the dynamics of neuronal structure and function, including synaptic plasticity. The chain is Neural cell adhesion molecule L1 (L1CAM) from Homo sapiens (Human).